The primary structure comprises 505 residues: Deoxyguanosinetriphosphate triphosphohydrolase (505 aa).

An HD domain is found at 66–273; the sequence is RLTHSLEVQQ…MEAADDISYC (208 aa).

The protein belongs to the dGTPase family. Type 1 subfamily. As to quaternary structure, homotetramer. Requires Mg(2+) as cofactor.

It carries out the reaction dGTP + H2O = 2'-deoxyguanosine + triphosphate + H(+). DGTPase preferentially hydrolyzes dGTP over the other canonical NTPs. This chain is Deoxyguanosinetriphosphate triphosphohydrolase, found in Escherichia fergusonii (strain ATCC 35469 / DSM 13698 / CCUG 18766 / IAM 14443 / JCM 21226 / LMG 7866 / NBRC 102419 / NCTC 12128 / CDC 0568-73).